Here is a 624-residue protein sequence, read N- to C-terminus: Glyco-Gag protein (624 aa).

The Cytoplasmic segment spans residues 1-63 (LGDVPGTSGA…FLPSVWNRSR (63 aa)). The helical transmembrane segment at 64–86 (AARLVCCSIVLCCLCLAVFLYWS) threads the bilayer. The Extracellular portion of the chain corresponds to 87–624 (ENMGQTVTTP…PQTSLLALDD (538 aa)). N-linked (GlcNAc...) asparagine; by host glycosylation is present at N113. 2 stretches are compositionally biased toward pro residues: residues 200-209 (PSLLPEPPLS) and 247-258 (DPPPYRDPGPPP). 2 disordered regions span residues 200-284 (PSLL…ASRL) and 290-309 (LPVADSTTSQAFPLRSGGNG). N478 carries N-linked (GlcNAc...) asparagine; by host glycosylation. Basic and acidic residues-rich tracts occupy residues 520–552 (RETPEEREERIKRETEEKEERRRAEDEQKEKER) and 572–605 (KQDRQGGERRRPQLDKDQCAYCKEKGHWAKDCPK). The interval 520–624 (RETPEEREER…PQTSLLALDD (105 aa)) is disordered.

Glycosylated by host. Post-translationally, cleaved by host near the middle of the molecule, releasing the c-terminal half containing capsid and nucleoprotein domains op GAG.

It is found in the host cell membrane. Plays a role in viral particle release. Presumably acts by facilitating the fission of the virion bud at the cell surface. May prevent the antiviral activity of murine APOBEC3. This is Glyco-Gag protein from Mus musculus (Mouse).